Consider the following 382-residue polypeptide: Glutamyl-tRNA reductase (382 aa).

Substrate-binding positions include Thr-38–Arg-41, Ser-85, Glu-90–Gln-92, and Gln-96. Cys-39 (nucleophile) is an active-site residue. NADP(+) is bound at residue Gly-164–Gly-169.

This sequence belongs to the glutamyl-tRNA reductase family. Homodimer.

It catalyses the reaction (S)-4-amino-5-oxopentanoate + tRNA(Glu) + NADP(+) = L-glutamyl-tRNA(Glu) + NADPH + H(+). The protein operates within porphyrin-containing compound metabolism; protoporphyrin-IX biosynthesis; 5-aminolevulinate from L-glutamyl-tRNA(Glu): step 1/2. Functionally, catalyzes the NADPH-dependent reduction of glutamyl-tRNA(Glu) to glutamate 1-semialdehyde (GSA). This is Glutamyl-tRNA reductase from Methanococcus maripaludis (strain C6 / ATCC BAA-1332).